Consider the following 118-residue polypeptide: Large ribosomal subunit protein bL19 (118 aa).

The protein belongs to the bacterial ribosomal protein bL19 family.

In terms of biological role, this protein is located at the 30S-50S ribosomal subunit interface and may play a role in the structure and function of the aminoacyl-tRNA binding site. This chain is Large ribosomal subunit protein bL19, found in Salinispora arenicola (strain CNS-205).